The primary structure comprises 193 residues: MSLQTLSTPTAEPVEEPRPVEAPWQVSDRIGTALLRAPQLGDAAEIWRIAKDSRVLDTNSSYAYLLWCRDFPGTTVVAEVDGRAVGFVIGYLRPESPDTVFVWQVAVSPTERGRGTGTALIQKLLDRVAPHGVTALETTISPDNPASIAMFAAVARRRGAQLTKQPLFDAGVFPDEHAPEDLYRIAPIAQEIR.

The interval 1–22 is disordered; sequence MSLQTLSTPTAEPVEEPRPVEA. Positions 33-185 constitute an N-acetyltransferase domain; sequence ALLRAPQLGD…EHAPEDLYRI (153 aa).

This sequence belongs to the acetyltransferase family. EctA subfamily.

It catalyses the reaction L-2,4-diaminobutanoate + acetyl-CoA = (2S)-4-acetamido-2-aminobutanoate + CoA + H(+). The protein operates within amine and polyamine biosynthesis; ectoine biosynthesis; L-ectoine from L-aspartate 4-semialdehyde: step 2/3. In terms of biological role, catalyzes the acetylation of L-2,4-diaminobutyrate (DABA) to gamma-N-acetyl-alpha,gamma-diaminobutyric acid (ADABA) with acetyl coenzyme A. The protein is L-2,4-diaminobutyric acid acetyltransferase (ectA) of Nocardia farcinica (strain IFM 10152).